Reading from the N-terminus, the 1019-residue chain is Photoactivated adenylate cyclase subunit alpha-like protein 1224-5/1F (1019 aa).

A BLUF 1 domain is found at 55-148 (LRRLMYLSAS…GRMYGWWHLK (94 aa)). The region spanning 204–332 (VVTVIYLVEF…DWINSASRIT (129 aa)) is the Guanylate cyclase 1 domain. Positions 467 to 559 (LITLTYISQA…GVYGSPLDMT (93 aa)) constitute a BLUF 2 domain. The 130-residue stretch at 615–744 (VMLATAISSF…EVRARVLEVE (130 aa)) folds into the Guanylate cyclase 2 domain. Positions 825 to 863 (NISCRGGNPPAGGIPTSPKVRPPGRTNSVSSYTPDPKQA) are disordered.

This sequence belongs to the adenylyl cyclase class-4/guanylyl cyclase family. In terms of assembly, heterotetramer of two alpha and two beta subunits.

Its subcellular location is the cell projection. It is found in the cilium. It localises to the flagellum. The sequence is that of Photoactivated adenylate cyclase subunit alpha-like protein 1224-5/1F from Euglena gracilis.